We begin with the raw amino-acid sequence, 419 residues long: 3-isopropylmalate dehydratase large subunit (419 aa).

Residues C300, C360, and C363 each coordinate [4Fe-4S] cluster.

It belongs to the aconitase/IPM isomerase family. LeuC type 2 subfamily. In terms of assembly, heterodimer of LeuC and LeuD. [4Fe-4S] cluster serves as cofactor.

It catalyses the reaction (2R,3S)-3-isopropylmalate = (2S)-2-isopropylmalate. The protein operates within amino-acid biosynthesis; L-leucine biosynthesis; L-leucine from 3-methyl-2-oxobutanoate: step 2/4. Functionally, catalyzes the isomerization between 2-isopropylmalate and 3-isopropylmalate, via the formation of 2-isopropylmaleate. This is 3-isopropylmalate dehydratase large subunit from Desulfatibacillum aliphaticivorans.